The primary structure comprises 597 residues: Phragmoplastin interacting protein 1 (597 aa).

Residues 18–136 (ESLSVSVSET…KTPKKAEEGN (119 aa)) form a disordered region. Over residues 20 to 29 (LSVSVSETNP) the composition is skewed to polar residues. Positions 30 to 40 (QSQSLKLLLDS) are enriched in low complexity. Basic residues-rich tracts occupy residues 43 to 53 (HKPRLSKREKR) and 112 to 129 (QKKKNKKKKKKRKVNKTP). Residues 112–119 (QKKKNKKK) carry the Nuclear localization signal motif. 2 consecutive RRM domains span residues 161 to 238 (NKLY…QYVK) and 262 to 338 (NRVY…CALK). 3 consecutive CCHC-type zinc fingers follow at residues 397–411 (CYECGEKGHLSTACP), 481–495 (CYECGEKGHLSTACP), and 576–591 (CYECGEKGHLSSACPN).

In terms of assembly, interacts with phragmoplastins (e.g. DRP1A, DRP1B, DRP1C, DRP1D and DRP1E) and with GTP-bound ARAC11/ROP1 as well as with Ran2 transcripts.

Its subcellular location is the nucleus. It localises to the cell membrane. The protein localises to the cytoplasm. The protein resides in the cytoskeleton. It is found in the phragmoplast. Its function is as follows. RNA-binding protein which mediates polarized mRNA (e.g. Ran2 transcripts mRNA) transport from the nucleus to the vicinity of the cell plate during cytokinesis and phragmoplast formation. The chain is Phragmoplastin interacting protein 1 from Arabidopsis thaliana (Mouse-ear cress).